The following is a 248-amino-acid chain: Carboxy-S-adenosyl-L-methionine synthase (248 aa).

Residues Y40, 65–67 (GCS), 95–96 (DN), 123–124 (DI), N138, and R205 each bind S-adenosyl-L-methionine.

This sequence belongs to the class I-like SAM-binding methyltransferase superfamily. Cx-SAM synthase family. Homodimer.

The enzyme catalyses prephenate + S-adenosyl-L-methionine = carboxy-S-adenosyl-L-methionine + 3-phenylpyruvate + H2O. Catalyzes the conversion of S-adenosyl-L-methionine (SAM) to carboxy-S-adenosyl-L-methionine (Cx-SAM). The protein is Carboxy-S-adenosyl-L-methionine synthase of Hahella chejuensis (strain KCTC 2396).